A 621-amino-acid polypeptide reads, in one-letter code: 5-aminolevulinate synthase, mitochondrial (621 aa).

Positions 76–95 (DAKGSLAGRPVHHKAATEST) are disordered. Substrate-binding residues include R122 and S234. Pyridoxal 5'-phosphate-binding residues include S286, H314, and T359. Residue K362 is part of the active site. K362 is subject to N6-(pyridoxal phosphate)lysine. Residues T391 and T392 each contribute to the pyridoxal 5'-phosphate site. Substrate is bound at residue T477.

Belongs to the class-II pyridoxal-phosphate-dependent aminotransferase family. Homodimer. Requires pyridoxal 5'-phosphate as cofactor.

The protein resides in the mitochondrion matrix. It catalyses the reaction succinyl-CoA + glycine + H(+) = 5-aminolevulinate + CO2 + CoA. The protein operates within porphyrin-containing compound metabolism; protoporphyrin-IX biosynthesis; 5-aminolevulinate from glycine: step 1/1. Functionally, catalyzes the synthesis of 5-aminolevulinate (ALA) from succinyl-CoA and glycine, the first and rate-limiting step in heme biosynthesis. The chain is 5-aminolevulinate synthase, mitochondrial (hem1) from Agaricus bisporus (White button mushroom).